A 384-amino-acid chain; its full sequence is Glucans biosynthesis protein C (384 aa).

Transmembrane regions (helical) follow at residues 17 to 37 (AWLMLLGIPFHISLIYSTHSW), 54 to 74 (FIHAFRMQVFFVISGYFSYML), 91 to 111 (VGIPMLTAIPLLTLPQFILLQ), 140 to 160 (LWFLLVLVILTTVSIGIFTWF), 173 to 193 (AISLAKLSLIFFLLGVAYAAI), 212 to 232 (FIVMQTLFYVPFFILGALAFI), 240 to 260 (FTTPSRGCTLGAAVAFIAYLL), 274 to 294 (TESVITMVMGLWMVNVVFSLG), 311 to 331 (ASLFIYLVHHPLTLFFGAYIT), and 338 to 358 (LIGFLCGLIFVMGIALILYEI).

The protein belongs to the acyltransferase 3 family. OpgC subfamily.

The protein localises to the cell membrane. It functions in the pathway glycan metabolism; osmoregulated periplasmic glucan (OPG) biosynthesis. Necessary for the succinyl substitution of periplasmic glucans. Could catalyze the transfer of succinyl residues from the cytoplasmic side of the membrane to the nascent glucan backbones on the periplasmic side of the membrane. In Salmonella typhi, this protein is Glucans biosynthesis protein C.